Here is a 305-residue protein sequence, read N- to C-terminus: Putative cuticle collagen 90 (305 aa).

Disordered stretches follow at residues 95-117 (AGPP…GDLG) and 146-305 (PPGQ…AKRH). Triple-helical region stretches follow at residues 96 to 125 (GPPG…SGIS), 142 to 204 (GPAG…PGTA), 208 to 252 (GAVG…NGRD), and 256 to 270 (GQPG…VGKD). The span at 150 to 162 (QGPVGPQGFPGVV) shows a compositional bias: low complexity. Residues 278–288 (ARRDSKTESVH) are compositionally biased toward basic and acidic residues.

It belongs to the cuticular collagen family. In terms of assembly, collagen polypeptide chains are complexed within the cuticle by disulfide bonds and other types of covalent cross-links.

In terms of biological role, nematode cuticles are composed largely of collagen-like proteins. The cuticle functions both as an exoskeleton and as a barrier to protect the worm from its environment. This chain is Putative cuticle collagen 90 (col-90), found in Caenorhabditis elegans.